A 526-amino-acid polypeptide reads, in one-letter code: Probable Xaa-Pro aminopeptidase GLRG_02280 (526 aa).

Mn(2+) is bound by residues D285, D296, E454, and E495.

It belongs to the peptidase M24B family. Mn(2+) is required as a cofactor.

It carries out the reaction Release of any N-terminal amino acid, including proline, that is linked to proline, even from a dipeptide or tripeptide.. In terms of biological role, catalyzes the removal of a penultimate prolyl residue from the N-termini of peptides. In Colletotrichum graminicola (strain M1.001 / M2 / FGSC 10212) (Maize anthracnose fungus), this protein is Probable Xaa-Pro aminopeptidase GLRG_02280.